The primary structure comprises 949 residues: MFGFQRRGLGTPRLQLWLLLLEFWEVGSGQLHYSVSEEAKHGTFVGRIAQDLGLELAELVPRLFRVASKTHGDLLEVNLQNGILFVNSRIDREELCGQSAECSIHLEVIVDRPLQVFHVNVEVKDINDNPPVFSLREQKLLIAESKQSDSRFPLEGASDADIEENALLTYRLSKNEYFSLDSPTNGKQIKRLSLILKKSLDREKTPELNLMVTATDGGKPELTGTVRLLVQVLDVNDNDPDFDKSEYKVSLMENAAKETLVLKLNATDRDEGVNGEVTYSLMSIKPNGRHLFTLDQNNGEVRVNGTLDYEENKFYKIEVQATDKGTPPMAGHCTVWVEILDTNDNSPEVAVTSLSLPVREDAQPSTVIALISVSDRDSGVNGQVTCSLTPHVPFKLVSTFKNYYSLVLDSALDRESVWAYELVVTARDGGSPSLWATARVSVEVADVNDNAPAFAQPEYTVFVKENNPPGCHIFTVSARDADAQENALVSYSLVERRLGDRALSSYVSVHAESGKVYALQPLDHEELELLQFQVSARDAGVPPLGSNVTLQVFVLDENDNAPALLATQAGSAGGAVNKLVPRSVGAGHVVAKVRAVDADSGYNAWLSYELQPAAGGSRIPFRVGLYTGEISTTRALDEADSPRHRLLVLVKDHGEPALTATATVLVSLVESGQAPKASSRTLVGAASPEAALVDVNVYLIIAICVVSSLLVLTLLLYTALWCSATPTEGACAPGKPTLVCSRAVGSWSYSQQRRQRVCSEEGPPKTDLMAFSPSLPLGLNKEEEGERQEPGSNHPGQPRQPNPDWRYSASLRAGMHSSVHLEEAGILRAGPGGPDQQWPTVSSATPEPEAGEVSPPVGAGVNSNSWTFKYGPGNPKQSGPGELPDKFIIPGSPAIISIRQEPANSQIDKSDFITFGKKEETKKKKKKKKGNKTQEKKEKGNSTTDNSDQ.

A signal peptide spans 1 to 29 (MFGFQRRGLGTPRLQLWLLLLEFWEVGSG). Cadherin domains are found at residues 30–133 (QLHY…PPVF), 157–242 (ASDA…DPDF), 243–349 (DKSE…SPEV), 350–454 (AVTS…APAF), 455–564 (AQPE…APAL), and 580–677 (VPRS…APKA). At 30-696 (QLHYSVSEEA…SPEAALVDVN (667 aa)) the chain is on the extracellular side. Asparagine 265 and asparagine 304 each carry an N-linked (GlcNAc...) asparagine glycan. Asparagine 547 carries an N-linked (GlcNAc...) asparagine glycan. A helical transmembrane segment spans residues 697–717 (VYLIIAICVVSSLLVLTLLLY). Residues 718-949 (TALWCSATPT…GNSTTDNSDQ (232 aa)) are Cytoplasmic-facing. 2 PXXP repeats span residues 733–736 (PGKP) and 773–776 (PSLP). Positions 733–893 (PGKPTLVCSR…PDKFIIPGSP (161 aa)) are 6 X 4 AA repeats of P-X-X-P. Disordered regions lie at residues 753 to 807 (RRQR…DWRY), 826 to 858 (ILRA…PPVG), and 870 to 889 (YGPG…KFII). A compositionally biased stretch (basic and acidic residues) spans 780 to 789 (NKEEEGERQE). PXXP repeat units follow at residues 795–798 (PGQP), 831–834 (PGGP), 872–875 (PGNP), and 890–893 (PGSP). The tract at residues 900–949 (QEPANSQIDKSDFITFGKKEETKKKKKKKKGNKTQEKKEKGNSTTDNSDQ) is disordered. A compositionally biased stretch (basic and acidic residues) spans 908-922 (DKSDFITFGKKEETK).

It localises to the cell membrane. Functionally, potential calcium-dependent cell-adhesion protein. May be involved in the establishment and maintenance of specific neuronal connections in the brain. This chain is Protocadherin alpha-11 (PCDHA11), found in Pan troglodytes (Chimpanzee).